The primary structure comprises 477 residues: Nuclear receptor subfamily 6 group A member 1-A (477 aa).

Positions 40–115 form a DNA-binding region, nuclear receptor; it reads QRSCLICGDR…MGMNRKAIRE (76 aa). 2 consecutive NR C4-type zinc fingers follow at residues 43 to 63 and 79 to 98; these read CLIC…CEGC and CSRD…CQYC. A disordered region spans residues 147-187; it reads DEANMPEHTWGNNGDSDHSSPGNGVSDGNQPSPVSTLSSNR. Polar residues predominate over residues 156 to 187; sequence WGNNGDSDHSSPGNGVSDGNQPSPVSTLSSNR. The NR LBD domain occupies 230 to 461; it reads QSHTLIGQLV…HSCKSSLSSY (232 aa).

The protein belongs to the nuclear hormone receptor family. NR6 subfamily. As to quaternary structure, homodimer. Expressed in germ cells, being predominant in previtellogenic oocytes in the ovary and in spermatocytes in the testis.

The protein localises to the nucleus. Functionally, probable orphan nuclear receptor. Binds to a response element containing repeats of the motif 5'-AGGTCA-3'. The polypeptide is Nuclear receptor subfamily 6 group A member 1-A (Danio rerio (Zebrafish)).